The sequence spans 388 residues: MSAAAPKPRPAHRFHIDQTLLSVCLCLLGIGFVMVASSSMHLGVKMADDVSYYPFKQLVHIILGLMFAAAILAIPMKYWQKIGQPLFIVGLVLLLVVLIPGVGVKVNGSTRWLSLLGLRIQVSEVMKFISVVYMAGYITRHSDHVRHSIFGLLRPLMLLSVASILLLLEPDFGSAVVILIIAMGMMFLGGARLSPFVALVALISSAGAILASSADYRVKRMTSFLNPWEHARDSGYQLTQALISFGRGEVSGVGLGNGLQKLFYLPEAHTDFLFSVLGEELGLVGVTLVIALFTTLVVRGFSIGEQAEAAGERFSALVAYGLVIWFGFQAFVNMGVNMGILPTKGLTLPLMSYGGGSMIVMCGAMAVLFRIHYEVTELHKSNIKGKSR.

Topologically, residues 1–19 are cytoplasmic; the sequence is MSAAAPKPRPAHRFHIDQT. The chain crosses the membrane as a helical span at residues 20–40; sequence LLSVCLCLLGIGFVMVASSSM. The Periplasmic portion of the chain corresponds to 41–57; the sequence is HLGVKMADDVSYYPFKQ. A helical membrane pass occupies residues 58–78; it reads LVHIILGLMFAAAILAIPMKY. The Cytoplasmic portion of the chain corresponds to 79-85; the sequence is WQKIGQP. The helical transmembrane segment at 86 to 106 threads the bilayer; the sequence is LFIVGLVLLLVVLIPGVGVKV. Residues 107–117 are Periplasmic-facing; sequence NGSTRWLSLLG. The chain crosses the membrane as a helical span at residues 118–137; sequence LRIQVSEVMKFISVVYMAGY. At 138–147 the chain is on the cytoplasmic side; the sequence is ITRHSDHVRH. Residues 148–168 form a helical membrane-spanning segment; that stretch reads SIFGLLRPLMLLSVASILLLL. The Periplasmic segment spans residues 169–170; the sequence is EP. A helical membrane pass occupies residues 171-191; it reads DFGSAVVILIIAMGMMFLGGA. Position 192 (arginine 192) is a topological domain, cytoplasmic. A helical membrane pass occupies residues 193-213; it reads LSPFVALVALISSAGAILASS. At 214-271 the chain is on the periplasmic side; the sequence is ADYRVKRMTSFLNPWEHARDSGYQLTQALISFGRGEVSGVGLGNGLQKLFYLPEAHTD. Residues 272 to 292 form a helical membrane-spanning segment; the sequence is FLFSVLGEELGLVGVTLVIAL. The Cytoplasmic portion of the chain corresponds to 293 to 315; that stretch reads FTTLVVRGFSIGEQAEAAGERFS. The helical transmembrane segment at 316 to 336 threads the bilayer; the sequence is ALVAYGLVIWFGFQAFVNMGV. The Periplasmic segment spans residues 337–348; it reads NMGILPTKGLTL. Residues 349–369 form a helical membrane-spanning segment; it reads PLMSYGGGSMIVMCGAMAVLF. Topologically, residues 370-388 are cytoplasmic; the sequence is RIHYEVTELHKSNIKGKSR.

The protein belongs to the SEDS family. FtsW subfamily.

The protein resides in the cell inner membrane. The enzyme catalyses [GlcNAc-(1-&gt;4)-Mur2Ac(oyl-L-Ala-gamma-D-Glu-L-Lys-D-Ala-D-Ala)](n)-di-trans,octa-cis-undecaprenyl diphosphate + beta-D-GlcNAc-(1-&gt;4)-Mur2Ac(oyl-L-Ala-gamma-D-Glu-L-Lys-D-Ala-D-Ala)-di-trans,octa-cis-undecaprenyl diphosphate = [GlcNAc-(1-&gt;4)-Mur2Ac(oyl-L-Ala-gamma-D-Glu-L-Lys-D-Ala-D-Ala)](n+1)-di-trans,octa-cis-undecaprenyl diphosphate + di-trans,octa-cis-undecaprenyl diphosphate + H(+). Its pathway is cell wall biogenesis; peptidoglycan biosynthesis. Its function is as follows. Peptidoglycan polymerase that is essential for cell division. The polypeptide is Probable peptidoglycan glycosyltransferase FtsW (Methylomonas methanica (strain DSM 25384 / MC09)).